The primary structure comprises 853 residues: Deubiquitinase otu (853 aa).

The interval 1–20 is disordered; that stretch reads MDMQVQRPITSGSRQAPDPY. The 122-residue stretch at 29–150 folds into the OTU domain; the sequence is LYRKHTARDA…ENHFDSVYDV (122 aa). D37 is a catalytic residue. Residue S40 is the Nucleophile of the active site. H143 is an active-site residue. Residues 336 to 396 enclose the Tudor domain; it reads NFKVGAKCKV…HPLPPDEYRP (61 aa). Residues 396-853 are LC domain; that stretch reads PWSLPFRYHR…AAVYAATRHH (458 aa). The span at 460-470 shows a compositional bias: basic and acidic residues; sequence QDDEQRDHNDP. 4 disordered regions span residues 460-531, 681-704, 732-794, and 817-853; these read QDDE…YVPM, AVES…LEKS, GPAA…AAQG, and NMDP…TRHH. The segment covering 499 to 517 has biased composition (low complexity); that stretch reads SRVQPQNSSSSQNQEVSGS. Over residues 747–758 the composition is skewed to polar residues; it reads NGSQFSFYTTPS. Pro residues predominate over residues 769-778; the sequence is LLQPPPPPPI. Low complexity-rich tracts occupy residues 783-794 and 820-838; these read AGPPQLGGAAQG and PSAQ…APLS.

In terms of assembly, self aggregates, forming amyloid-like fibrillar helical structures; protein aggregation is mediated by the C-terminal LC domain, is enhanced by RNA binding and is essential for deubiquitinase activity. Interacts (via OTU domain) with bam (via C-terminus); the interaction enhances otu aggregation and deubiquitinase activity. Together with bam interacts with CycA/cyclin-A; the interaction stabilizes CycA by promoting its deubiquitination. Together with bam interacts with Traf6. Interacts with Hrb27C; the interaction is RNA-independent. Associates (via N-terminus) with mRNP complexes; the interaction is weak. Expressed at high levels in the ovary, at low levels in the brain and fat body, and at moderate levels in the gut.

It localises to the cytoplasm. It is found in the cell cortex. The protein resides in the perinuclear region. Activated by protein aggregation, which is mediated by the LC domain and enhanced by RNA binding. Its function is as follows. Catalytic component of a deubiquitinase complex consisting of bam and otu. The complex deubiquitinates K63-linked polyubiquitinated proteins; this antagonizes the ubiquitination activity of Traf6 and regulates the IMD immune signaling pathway. Otu-bam deubiquitinase activity is regulated by Traf6 dependent immune signaling regulation of bam expression levels; this forms a feedback loop that regulates the IMD immune signaling pathway and balances gut immune activity during aging. The complex deubiquitinates and stabilizes CycA/cyclin-A to regulate CycA-dependent differentiation. Involved in grk mRNA localization to the dorsal anterior region of the oocyte required for dorsal-ventral axis determination; may function as a ribonuclear protein complex together with sqd and Hrb27C. May regulate actin cytoskeleton organization in differentiating cystocytes during fusome maturation; required for efficient nurse cell cytoplasmic dumping during oogenesis. Essential for female fertility; involved in germ cell proliferation and germ cell differentiation. In terms of biological role, involved in the early stages of germ cell proliferation and differentiation during oogenesis. Required for polytene chromosome dispersal in nurse cells during oogenesis. Functionally, involved in the later stages of germ cell proliferation and differentiation during oogenesis. In Drosophila melanogaster (Fruit fly), this protein is Deubiquitinase otu.